The following is a 233-amino-acid chain: Hydroxyacylglutathione hydrolase (233 aa).

Histidine 52, histidine 54, aspartate 56, histidine 57, histidine 108, aspartate 125, and histidine 163 together coordinate Zn(2+).

It belongs to the metallo-beta-lactamase superfamily. Glyoxalase II family. In terms of assembly, monomer. Zn(2+) serves as cofactor.

The enzyme catalyses an S-(2-hydroxyacyl)glutathione + H2O = a 2-hydroxy carboxylate + glutathione + H(+). It participates in secondary metabolite metabolism; methylglyoxal degradation; (R)-lactate from methylglyoxal: step 2/2. Its function is as follows. Thiolesterase that catalyzes the hydrolysis of S-D-lactoyl-glutathione to form glutathione and D-lactic acid. This chain is Hydroxyacylglutathione hydrolase, found in Actinobacillus succinogenes (strain ATCC 55618 / DSM 22257 / CCUG 43843 / 130Z).